Here is a 201-residue protein sequence, read N- to C-terminus: Probable molybdenum cofactor guanylyltransferase (201 aa).

GTP-binding positions include 6–8, Lys-18, Asp-65, and Asp-97; that span reads LAG. Residue Asp-97 participates in Mg(2+) binding.

The protein belongs to the MobA family. Mg(2+) is required as a cofactor.

The protein resides in the cytoplasm. The enzyme catalyses Mo-molybdopterin + GTP + H(+) = Mo-molybdopterin guanine dinucleotide + diphosphate. Functionally, transfers a GMP moiety from GTP to Mo-molybdopterin (Mo-MPT) cofactor (Moco or molybdenum cofactor) to form Mo-molybdopterin guanine dinucleotide (Mo-MGD) cofactor. The protein is Probable molybdenum cofactor guanylyltransferase of Staphylococcus epidermidis (strain ATCC 35984 / DSM 28319 / BCRC 17069 / CCUG 31568 / BM 3577 / RP62A).